Consider the following 67-residue polypeptide: Small ribosomal subunit protein eS31 (67 aa).

Zn(2+)-binding residues include cysteine 35, cysteine 38, cysteine 54, and cysteine 57. The segment at 35-57 (CPRCGSIMAHHMKPLERWACGKC) adopts a C4-type zinc-finger fold.

Belongs to the eukaryotic ribosomal protein eS31 family. As to quaternary structure, part of the 30S ribosomal subunit. The cofactor is Zn(2+).

The sequence is that of Small ribosomal subunit protein eS31 from Sulfolobus acidocaldarius (strain ATCC 33909 / DSM 639 / JCM 8929 / NBRC 15157 / NCIMB 11770).